Reading from the N-terminus, the 417-residue chain is uncharacterized protein (417 aa).

The next 10 membrane-spanning stretches (helical) occupy residues 21 to 41, 50 to 70, 88 to 108, 166 to 186, 217 to 237, 255 to 275, 283 to 303, 308 to 328, 351 to 371, and 373 to 393; these read ISSL…AFQL, LLMM…GLLA, LTVI…LLSV, SVFY…FFLP, MPLL…LQIG, LAGW…AITG, LLYF…APFL, IAGI…FGLV, AIQS…GVLA, and WIGV…IGLI.

The protein belongs to the major facilitator superfamily. TCR/Tet family.

The protein resides in the cell membrane. This is an uncharacterized protein from Bacillus subtilis (strain 168).